A 245-amino-acid chain; its full sequence is Orotidine 5'-phosphate decarboxylase (245 aa).

Substrate-binding positions include Asp-22, Lys-44, 71-80 (DLKFHDIPNT), Thr-131, Arg-192, Gln-201, Gly-221, and Arg-222. Lys-73 serves as the catalytic Proton donor.

It belongs to the OMP decarboxylase family. Type 1 subfamily. As to quaternary structure, homodimer.

It catalyses the reaction orotidine 5'-phosphate + H(+) = UMP + CO2. The protein operates within pyrimidine metabolism; UMP biosynthesis via de novo pathway; UMP from orotate: step 2/2. Functionally, catalyzes the decarboxylation of orotidine 5'-monophosphate (OMP) to uridine 5'-monophosphate (UMP). The protein is Orotidine 5'-phosphate decarboxylase of Escherichia coli O81 (strain ED1a).